The following is a 744-amino-acid chain: Translation initiation factor IF-2, chloroplastic (744 aa).

Residues 113–146 (NSEGSFKSGKQKKKEKGKHKQNVNKDIHHTKNNR) form a disordered region. The span at 121–134 (GKQKKKEKGKHKQN) shows a compositional bias: basic residues. The tr-type G domain maps to 244–417 (NRAPIVTILG…CSLAEFINLK (174 aa)). A G1 region spans residues 253–260 (GHVDHGKT). GTP is bound at residue 253–260 (GHVDHGKT). Residues 278 to 282 (GITQS) form a G2 region. The interval 303–306 (DTPG) is G3. Residues 303–307 (DTPGH) and 357–360 (NKID) contribute to the GTP site. The segment at 357–360 (NKID) is G4. The segment at 393 to 395 (SAL) is G5.

It belongs to the TRAFAC class translation factor GTPase superfamily. Classic translation factor GTPase family. IF-2 subfamily.

It localises to the plastid. The protein resides in the chloroplast. Functionally, one of the essential components for the initiation of protein synthesis. Protects formylmethionyl-tRNA from spontaneous hydrolysis and promotes its binding to the 30S ribosomal subunits. Also involved in the hydrolysis of GTP during the formation of the 70S ribosomal complex. This chain is Translation initiation factor IF-2, chloroplastic (infB), found in Gracilaria tenuistipitata var. liui (Red alga).